A 142-amino-acid polypeptide reads, in one-letter code: MVLSPADKSNVKAAWGKVGGHAGEYGAEALERMFLSFPTTKTYFPHFDLSHGSAQVKGHGKKVADALTLAVGHVDDMPHALSALSDLHAHKLRVDPVNFKLLSHCLLVTLAAHLPAEFTPAVHASLDKFLASVSTVLTSKYR.

The region spanning 2–142 (VLSPADKSNV…VSTVLTSKYR (141 aa)) is the Globin domain. Ser4 is modified (phosphoserine). 2 positions are modified to N6-succinyllysine: Lys8 and Lys12. Lys17 is modified (N6-acetyllysine; alternate). Position 17 is an N6-succinyllysine; alternate (Lys17). At Tyr25 the chain carries Phosphotyrosine. At Ser36 the chain carries Phosphoserine. Position 41 is an N6-succinyllysine (Lys41). Ser50 is modified (phosphoserine). His59 is a binding site for O2. His88 lines the heme b pocket. A Phosphoserine modification is found at Ser103. Thr109 is modified (phosphothreonine). A phosphoserine mark is found at Ser125 and Ser132. Phosphothreonine is present on residues Thr135 and Thr138. The residue at position 139 (Ser139) is a Phosphoserine.

Belongs to the globin family. In terms of assembly, heterotetramer of two alpha chains and two beta chains. In terms of tissue distribution, red blood cells.

Its function is as follows. Involved in oxygen transport from the lung to the various peripheral tissues. Functionally, hemopressin acts as an antagonist peptide of the cannabinoid receptor CNR1. Hemopressin-binding efficiently blocks cannabinoid receptor CNR1 and subsequent signaling. This chain is Hemoglobin subunit alpha (HBA), found in Chlorocebus aethiops (Green monkey).